The primary structure comprises 542 residues: Phosphoenolpyruvate carboxykinase (ATP) (542 aa).

The substrate site is built by Arg67, Tyr208, and Lys214. ATP-binding positions include Lys214, His233, and 249–257 (GLSGTGKTT). Residues Lys214 and His233 each coordinate Mn(2+). Asp270 is a Mn(2+) binding site. Residues Glu298, Arg334, 450–451 (RI), and Thr456 contribute to the ATP site. Residue Arg334 coordinates substrate.

The protein belongs to the phosphoenolpyruvate carboxykinase (ATP) family. As to quaternary structure, monomer. Mn(2+) is required as a cofactor.

The protein resides in the cytoplasm. It catalyses the reaction oxaloacetate + ATP = phosphoenolpyruvate + ADP + CO2. The protein operates within carbohydrate biosynthesis; gluconeogenesis. In terms of biological role, involved in the gluconeogenesis. Catalyzes the conversion of oxaloacetate (OAA) to phosphoenolpyruvate (PEP) through direct phosphoryl transfer between the nucleoside triphosphate and OAA. This is Phosphoenolpyruvate carboxykinase (ATP) from Vibrio vulnificus (strain YJ016).